A 485-amino-acid polypeptide reads, in one-letter code: Probable outer membrane usher protein LpfC' (485 aa).

It belongs to the fimbrial export usher family.

It localises to the cell outer membrane. Its function is as follows. Part of the lpfABCC'DE fimbrial operon. LP fimbriae may participate in the interaction with eukaryotic cells by assisting in microcolony formation. Could be involved in the export and assembly of the fimbrial subunits across the outer membrane. This Escherichia coli O157:H7 protein is Probable outer membrane usher protein LpfC' (lpfC').